Consider the following 403-residue polypeptide: F-box/kelch-repeat protein At5g39560 (403 aa).

Positions 26 to 72 (PPSLMSLPYEIIENILARISKWSYPNLSLVSKSFLSLLSSPQLYKTR) constitute an F-box domain. Kelch repeat units follow at residues 138 to 182 (EIYV…LIDQ), 184 to 229 (IYVL…VWPN), 248 to 294 (NPNA…IENV), and 296 to 340 (YACH…VNYG).

The polypeptide is F-box/kelch-repeat protein At5g39560 (Arabidopsis thaliana (Mouse-ear cress)).